Reading from the N-terminus, the 452-residue chain is Trigger factor (452 aa).

One can recognise a PPIase FKBP-type domain in the interval 171 to 256; it reads GDRVTISFKG…ATKVEAPQDT (86 aa).

The protein belongs to the FKBP-type PPIase family. Tig subfamily.

It is found in the cytoplasm. The catalysed reaction is [protein]-peptidylproline (omega=180) = [protein]-peptidylproline (omega=0). Involved in protein export. Acts as a chaperone by maintaining the newly synthesized protein in an open conformation. Functions as a peptidyl-prolyl cis-trans isomerase. This Rhodopseudomonas palustris (strain HaA2) protein is Trigger factor.